Reading from the N-terminus, the 469-residue chain is Ectonucleoside triphosphate diphosphohydrolase 5 (469 aa).

A signal peptide spans 1–24; sequence MATPWGAVFFLLMIACAGSTVFYR. Catalysis depends on Glu172, which acts as the Proton acceptor. A glycan (N-linked (GlcNAc...) asparagine) is linked at Asn232. Intrachain disulfides connect Cys272-Cys303 and Cys363-Cys377.

The protein belongs to the GDA1/CD39 NTPase family. Monomer; active form. Homodimer; disulfide-linked. Homodimers are enzymatically inactive. The cofactor is Ca(2+). It depends on Mg(2+) as a cofactor. N-glycosylated; high-mannose type. Expressed in fetal cells and most adult tissues.

Its subcellular location is the endoplasmic reticulum. The protein resides in the secreted. The enzyme catalyses a ribonucleoside 5'-diphosphate + H2O = a ribonucleoside 5'-phosphate + phosphate + H(+). It catalyses the reaction GDP + H2O = GMP + phosphate + H(+). The catalysed reaction is UDP + H2O = UMP + phosphate + H(+). It carries out the reaction IDP + H2O = IMP + phosphate + H(+). The enzyme catalyses CDP + H2O = CMP + phosphate + H(+). It catalyses the reaction ADP + H2O = AMP + phosphate + H(+). It functions in the pathway protein modification; protein glycosylation. Hydrolyzes nucleoside diphosphates with a preference for GDP, IDP and UDP compared to ADP and CDP. In the lumen of the endoplasmic reticulum, hydrolyzes UDP that acts as an end-product feedback inhibitor of the UDP-Glc:glycoprotein glucosyltransferases. UMP can be transported back by an UDP-sugar antiporter to the cytosol where it is consumed to regenerate UDP-glucose. Therefore, it positively regulates protein reglucosylation by clearing UDP from the ER lumen and by promoting the regeneration of UDP-glucose. Protein reglucosylation is essential to proper glycoprotein folding and quality control in the ER. The chain is Ectonucleoside triphosphate diphosphohydrolase 5 (ENTPD5) from Mesocricetus auratus (Golden hamster).